We begin with the raw amino-acid sequence, 319 residues long: Tyrosine phosphatase-like protein N3 (319 aa).

The 279-residue stretch at 7 to 285 (SNLSIHEFWR…LIINKILLHS (279 aa)) folds into the Tyrosine-protein phosphatase domain.

Belongs to the protein-tyrosine phosphatase family.

The sequence is that of Tyrosine phosphatase-like protein N3 (N7) from Microplitis demolitor bracovirus (isolate Webb) (MdBV).